The following is a 216-amino-acid chain: ATP-dependent Clp protease proteolytic subunit 3 (216 aa).

Ser120 acts as the Nucleophile in catalysis. Residue His145 is part of the active site.

Belongs to the peptidase S14 family. As to quaternary structure, fourteen ClpP subunits assemble into 2 heptameric rings which stack back to back to give a disk-like structure with a central cavity, resembling the structure of eukaryotic proteasomes.

It localises to the cytoplasm. It catalyses the reaction Hydrolysis of proteins to small peptides in the presence of ATP and magnesium. alpha-casein is the usual test substrate. In the absence of ATP, only oligopeptides shorter than five residues are hydrolyzed (such as succinyl-Leu-Tyr-|-NHMec, and Leu-Tyr-Leu-|-Tyr-Trp, in which cleavage of the -Tyr-|-Leu- and -Tyr-|-Trp bonds also occurs).. Functionally, cleaves peptides in various proteins in a process that requires ATP hydrolysis. Has a chymotrypsin-like activity. Plays a major role in the degradation of misfolded proteins. The polypeptide is ATP-dependent Clp protease proteolytic subunit 3 (Prochlorococcus marinus (strain SARG / CCMP1375 / SS120)).